The sequence spans 245 residues: 6-carboxyhexanoate--CoA ligase (245 aa).

This sequence belongs to the BioW family. Homodimer. It depends on Mg(2+) as a cofactor.

It carries out the reaction heptanedioate + ATP + CoA = 6-carboxyhexanoyl-CoA + AMP + diphosphate. It functions in the pathway metabolic intermediate metabolism; pimeloyl-CoA biosynthesis; pimeloyl-CoA from pimelate: step 1/1. In terms of biological role, catalyzes the transformation of pimelate into pimeloyl-CoA with concomitant hydrolysis of ATP to AMP. In Sulfurihydrogenibium sp. (strain YO3AOP1), this protein is 6-carboxyhexanoate--CoA ligase.